A 344-amino-acid chain; its full sequence is Serpentine receptor class delta-3 (344 aa).

7 consecutive transmembrane segments (helical) span residues 21–41, 54–74, 102–122, 142–162, 203–223, 259–279, and 287–307; these read IIGY…IILI, MLHL…MLAL, FLHV…MISF, ICIL…SDVA, FSAI…IVFF, IVPI…FQVV, and MPFR…LYFV.

The protein belongs to the nematode receptor-like protein srd family.

It is found in the membrane. The sequence is that of Serpentine receptor class delta-3 (srd-3) from Caenorhabditis elegans.